A 141-amino-acid polypeptide reads, in one-letter code: Light-regulated protein 1, chloroplastic (141 aa).

A chloroplast-targeting transit peptide spans 1–41 (MQGALFIKPTILLPLPSSVSSPKLTFLLPHATKASRLSSLR). A compositionally biased stretch (low complexity) spans 35–51 (SRLSSLRSNNSSSSSSL). Residues 35–58 (SRLSSLRSNNSSSSSSLTSDPNTV) form a disordered region. A 2 X 15 AA approximate repeats region spans residues 58 to 132 (VDYNSSILSV…ACDDLGGEFC (75 aa)). A run of 2 repeats spans residues 67 to 81 (VFPA…GYAC) and 118 to 132 (VFRE…GEFC).

In terms of assembly, component of high molecular weight thylakoid LFNRs-containing protein complexes containing LIR1, LFNR1, LFNR2, TIC62 and TROL proteins. Interacts directly with LFNR1 and LFNR2; LIR1 increases the affinity of LFNR1 and LFNR2 for TIC62 and subsequent thylakoid relocalization. Post-translationally, may form interchain disulfide bonds with LFNR1 and LFNR2.

The protein resides in the plastid. The protein localises to the chloroplast thylakoid membrane. It localises to the chloroplast envelope. It is found in the chloroplast stroma. Thylakoid-determinant subunit of high molecular weight LFNRs-containing protein complexes. In Arabidopsis thaliana (Mouse-ear cress), this protein is Light-regulated protein 1, chloroplastic.